A 296-amino-acid chain; its full sequence is Phosphoribosylaminoimidazole-succinocarboxamide synthase (296 aa).

This sequence belongs to the SAICAR synthetase family.

It catalyses the reaction 5-amino-1-(5-phospho-D-ribosyl)imidazole-4-carboxylate + L-aspartate + ATP = (2S)-2-[5-amino-1-(5-phospho-beta-D-ribosyl)imidazole-4-carboxamido]succinate + ADP + phosphate + 2 H(+). It participates in purine metabolism; IMP biosynthesis via de novo pathway; 5-amino-1-(5-phospho-D-ribosyl)imidazole-4-carboxamide from 5-amino-1-(5-phospho-D-ribosyl)imidazole-4-carboxylate: step 1/2. This Trichlorobacter lovleyi (strain ATCC BAA-1151 / DSM 17278 / SZ) (Geobacter lovleyi) protein is Phosphoribosylaminoimidazole-succinocarboxamide synthase.